The sequence spans 605 residues: MQIKKINNKQKRIRNFSIIAHVDHGKSTLADRILEITNTVEKRLMQKQFLDSMDLEKERGITIKLNAVQIIFNDKKGDEYIMHLIDTPGHVDFNYEVSRALAACEGVILVIDATQGIQAQTLTNFYLAIENNLLIIPVINKIDLPNADVNKVRREIKDTLGIEPENTILVSGKTGVGVTEILEKVVSNIPSPRGDINEPFQSLVFDSFFDPYKGVVSLIRVFSGKIQKGDQIRFMSNNEVYEVSEVGVYSPFQTPKPFLFVGEVGYLSASIKNIDKVRVGDTITNHKNPTKQRLPGYRKIQPVVFCGLYPITCSKYETLKSALEKLKLNDASLTFEPETSVALGLGFRIGFLGLLHMEIIQERISREFDIEAITTAPSVIYHVYTKKGTKILVDNPSKWPNTQIIERVEEPFIKATIICPQIYIGTVMTLSQSKRGQLKDISYLDKNIAMIIYFFPLSEIMYNYFDKLKSVTKGYASFEYEIDSYRSSSLQKMDILLNGEVIDALSIIIHKDFAYSRGKVICSKLIECIPKQMFEVPIQVAIGKRVIVRENIKSMRKDVISKCYGGDVSRKKKLLSKQKEGKKKMKNLGKVKLPQKAFLAILSTE.

Positions 11–193 constitute a tr-type G domain; the sequence is KRIRNFSIIA…KVVSNIPSPR (183 aa). GTP contacts are provided by residues 23 to 28 and 140 to 143; these read DHGKST and NKID.

The protein belongs to the TRAFAC class translation factor GTPase superfamily. Classic translation factor GTPase family. LepA subfamily.

The protein resides in the cell membrane. It carries out the reaction GTP + H2O = GDP + phosphate + H(+). Required for accurate and efficient protein synthesis under certain stress conditions. May act as a fidelity factor of the translation reaction, by catalyzing a one-codon backward translocation of tRNAs on improperly translocated ribosomes. Back-translocation proceeds from a post-translocation (POST) complex to a pre-translocation (PRE) complex, thus giving elongation factor G a second chance to translocate the tRNAs correctly. Binds to ribosomes in a GTP-dependent manner. The sequence is that of Elongation factor 4 from Phytoplasma mali (strain AT).